We begin with the raw amino-acid sequence, 377 residues long: 23S rRNA (uracil(747)-C(5))-methyltransferase RlmC (377 aa).

Cys-3, Cys-11, Cys-14, and Cys-87 together coordinate [4Fe-4S] cluster. Residues Gln-212, Phe-241, Glu-262, and Asn-307 each coordinate S-adenosyl-L-methionine. The Nucleophile role is filled by Cys-334.

This sequence belongs to the class I-like SAM-binding methyltransferase superfamily. RNA M5U methyltransferase family. RlmC subfamily.

The enzyme catalyses uridine(747) in 23S rRNA + S-adenosyl-L-methionine = 5-methyluridine(747) in 23S rRNA + S-adenosyl-L-homocysteine + H(+). In terms of biological role, catalyzes the formation of 5-methyl-uridine at position 747 (m5U747) in 23S rRNA. In Xenorhabdus bovienii (strain SS-2004) (Xenorhabdus nematophila subsp. bovienii), this protein is 23S rRNA (uracil(747)-C(5))-methyltransferase RlmC.